The primary structure comprises 175 residues: Apoptosis regulatory protein Siva (175 aa).

At Tyr-34 the chain carries Phosphotyrosine; by ABL2. The interval Gln-36–Asp-55 is interaction with BCL2L1 isoform Bcl-x(L) and inhibition of BCL2L1 anti-apoptotic activity. Phosphoserine is present on Ser-70. The tract at residues Asp-105–Gly-123 is interaction with coxsackievirus B3 VP2.

In terms of assembly, binds through its N-terminal region to the C-terminus of CD27 and to PXMP2/PMP22. Binds to the C-terminus of TNFRSF18/GITR. Isoform 1 binds to BCL2L1/BCLX isoform Bcl-x(L) but not to BAX. (Microbial infection) Interacts with coxsackievirus B3 capsid protein VP2; this interaction inhibits the binding of SIVA1 to CD27. It depends on Zn(2+) as a cofactor. Phosphorylated by ABL2/ARG in response to oxidative stress. In terms of tissue distribution, ubiquitous. Mostly expressed in thymus, testis, ovary, prostate, small intestine and spleen and less in colon.

The protein resides in the cytoplasm. Its subcellular location is the nucleus. In terms of biological role, induces CD27-mediated apoptosis. Inhibits BCL2L1 isoform Bcl-x(L) anti-apoptotic activity. Inhibits activation of NF-kappa-B and promotes T-cell receptor-mediated apoptosis. In Homo sapiens (Human), this protein is Apoptosis regulatory protein Siva (SIVA1).